Here is a 252-residue protein sequence, read N- to C-terminus: Protein BTG3 (252 aa).

The tract at residues 138 to 162 (VTSDYHSGSSSSDEETSKEMEVKPS) is disordered.

This sequence belongs to the BTG family. As to expression, ubiquitous. High expression in the ventricular zone of the developing central nervous system. High in ovary, testis, prostate, thymus and lung.

Overexpression impairs serum-induced cell cycle progression from the G0/G1 to S phase. The sequence is that of Protein BTG3 (BTG3) from Homo sapiens (Human).